The primary structure comprises 199 residues: Recombination protein RecR (199 aa).

Residues 56-71 (CRSCFNVAQSELCRIC) form a C4-type zinc finger. The 96-residue stretch at 79–174 (ALICVVEEPK…RVTRLASGLP (96 aa)) folds into the Toprim domain.

Belongs to the RecR family.

Functionally, may play a role in DNA repair. It seems to be involved in an RecBC-independent recombinational process of DNA repair. It may act with RecF and RecO. In Frankia alni (strain DSM 45986 / CECT 9034 / ACN14a), this protein is Recombination protein RecR.